Consider the following 392-residue polypeptide: Protein O-glucosyltransferase 1 (392 aa).

The N-terminal stretch at 1–23 (MEWWASSPLRLWLLLFLLPSAQG) is a signal peptide. N-linked (GlcNAc...) asparagine glycans are attached at residues asparagine 40 and asparagine 53. 4 cysteine pairs are disulfide-bonded: cysteine 49/cysteine 56, cysteine 54/cysteine 357, cysteine 102/cysteine 108, and cysteine 263/cysteine 286. Residues 103-107 (MFPSR) form an interaction with the consensus sequence C-X-S-X-[PA]-C in peptide substrates region. Residue aspartate 133 is the Proton donor/acceptor of the active site. Residues 172–178 (AVWPIYP) form an interaction with the consensus sequence C-X-S-X-[PA]-C in peptide substrates region. Tyrosine 177 is a UDP-alpha-D-glucose binding site. Asparagine 204 is a glycosylation site (N-linked (GlcNAc...) asparagine). Residues serine 212, arginine 218, and 274–279 (VAASFR) contribute to the UDP-alpha-D-glucose site. Asparagine 373 carries N-linked (GlcNAc...) asparagine glycosylation. The short motif at 389 to 392 (KTEL) is the Prevents secretion from ER element.

The protein belongs to the glycosyltransferase 90 family. In terms of tissue distribution, expressed in most adult tissues at different intensities. Abundantly expressed in liver. Expressed also in brain, heart, skeletal muscle, spleen, kidney, placenta, lung and peripheral blood leukocyte. Not detectable in colon, thymus and small intestine. Expressed in the epidermis, especially in the upper parts, stratum spinosum and stratum granulosum (at protein level).

Its subcellular location is the endoplasmic reticulum lumen. The enzyme catalyses L-seryl-[EGF-like domain protein] + UDP-alpha-D-xylose = 3-O-(beta-D-xylosyl)-L-seryl-[EGF-like domain protein] + UDP + H(+). It carries out the reaction L-seryl-[EGF-like domain protein] + UDP-alpha-D-glucose = 3-O-(beta-D-glucosyl)-L-seryl-[EGF-like domain protein] + UDP + H(+). The protein operates within protein modification; protein glycosylation. In terms of biological role, dual specificity glycosyltransferase that catalyzes the transfer of glucose and xylose from UDP-glucose and UDP-xylose, respectively, to a serine residue found in the consensus sequence of C-X-S-X-P-C. Specifically targets extracellular EGF repeats of protein such as CRB2, F7, F9 and NOTCH2. Acts as a positive regulator of Notch signaling by mediating O-glucosylation of Notch, leading to regulate muscle development. Notch glucosylation does not affect Notch ligand binding. Required during early development to promote gastrulation: acts by mediating O-glucosylation of CRB2, which is required for CRB2 localization to the cell membrane. This Homo sapiens (Human) protein is Protein O-glucosyltransferase 1.